Here is a 233-residue protein sequence, read N- to C-terminus: MAFSYASFSTPFNGFAANPSPITSAFLGPSLRFSTRTSKTRNPSNGVSVKSSNSHRFLVKSKNFSVYARAAAEKSVHDFTVKDIDGNDVSLDKFKGKPLLIVNVASRCGLTSSNYSELSQLYEKYKNQGFEILAFPCNQFGGQEPGSNPEIKQFACTRFKAEFPIFDKVDVNGPSTAPIYKFLKSNAGGFLGDIIKWNFEKFLVDKKGKVVERYPPTTSPFQIEKDIQKLLAA.

Residues 1 to 69 (MAFSYASFST…KSKNFSVYAR (69 aa)) constitute a chloroplast transit peptide. The active site involves Cys108.

The protein belongs to the glutathione peroxidase family.

Its subcellular location is the plastid. The protein resides in the chloroplast. The catalysed reaction is 2 glutathione + H2O2 = glutathione disulfide + 2 H2O. May constitute a glutathione peroxidase-like protective system against oxidative stresses. The chain is Putative glutathione peroxidase 7, chloroplastic (GPX7) from Arabidopsis thaliana (Mouse-ear cress).